We begin with the raw amino-acid sequence, 376 residues long: uncharacterized protein (376 aa).

The protein belongs to the glycosyltransferase 28 family.

This is an uncharacterized protein from Methanosarcina mazei (strain ATCC BAA-159 / DSM 3647 / Goe1 / Go1 / JCM 11833 / OCM 88) (Methanosarcina frisia).